We begin with the raw amino-acid sequence, 384 residues long: PqqA peptide cyclase (384 aa).

One can recognise a Radical SAM core domain in the interval 5–220; it reads VGLPLWLLAE…TNEYREKLKA (216 aa). Positions 19, 23, and 26 each coordinate [4Fe-4S] cluster.

This sequence belongs to the radical SAM superfamily. PqqE family. As to quaternary structure, interacts with PqqD. The interaction is necessary for activity of PqqE. [4Fe-4S] cluster is required as a cofactor.

It catalyses the reaction [PQQ precursor protein] + S-adenosyl-L-methionine = E-Y cross-linked-[PQQ precursor protein] + 5'-deoxyadenosine + L-methionine + H(+). It participates in cofactor biosynthesis; pyrroloquinoline quinone biosynthesis. Catalyzes the cross-linking of a glutamate residue and a tyrosine residue in the PqqA protein as part of the biosynthesis of pyrroloquinoline quinone (PQQ). This Acinetobacter baumannii (strain AB0057) protein is PqqA peptide cyclase.